A 194-amino-acid chain; its full sequence is MYIMKQSGWLELICGSMFSGKSEELIRRVKRATYAKQEVKVFKPAIDNRYSEEAVVSHNGTSMTSHVISSSAEIWDHISESTDVIAVDEVQFFGESIIGDLSSLADKGYRVIAAGLDMDFRGEPFGVVPNLMAVAESVTKLQAVCSVCGSPASRTQRLIDGKPASYDDPVILVGASESYEARCRHHHEVPKKTD.

ATP-binding positions include 15-22 and 88-91; these read GSMFSGKS and DEVQ. Glutamate 89 serves as the catalytic Proton acceptor. The Zn(2+) site is built by cysteine 145, cysteine 148, cysteine 183, and histidine 186.

Belongs to the thymidine kinase family. As to quaternary structure, homotetramer.

It localises to the cytoplasm. It carries out the reaction thymidine + ATP = dTMP + ADP + H(+). The polypeptide is Thymidine kinase (Bacillus velezensis (strain DSM 23117 / BGSC 10A6 / LMG 26770 / FZB42) (Bacillus amyloliquefaciens subsp. plantarum)).